The chain runs to 311 residues: Regulator of rDNA transcription protein 6 (311 aa).

2 consecutive transmembrane segments (helical) span residues 32 to 52 (PHLL…SAEL) and 271 to 291 (YLIV…IIVT).

It is found in the membrane. In terms of biological role, may be involved in the modulation of rDNA transcription. The polypeptide is Regulator of rDNA transcription protein 6 (RRT6) (Saccharomyces cerevisiae (strain ATCC 204508 / S288c) (Baker's yeast)).